The primary structure comprises 798 residues: MNLQLIFWIGLISSICCVFGQADENRCLKANAKSCGECIQAGPNCGWCVNSTFLQEGMPTSARCDDLEALKKKGCHPDDIENPRGSKDVKKNKNVTNRSKGTAEKLQPEDITQIQPQQLVLQLRSGEPQTFTLKFKRAEDYPIDLYYLMDLSYSMKDDLENVKSLGTDLLNEMRRITSDFRIGFGSFVEKTVMPYISTTPAKLRNPCTSEQNCTSPFSYKNVLSLTDKGEVFNELVGKQRISGNLDSPEGGFDAIMQVAVCGSLIGWRNVTRLLVFSTDAGFHFAGDGKLGGIVLPNDGQCHLENDVYTMSHYYDYPSIAHLVQKLSENNIQTIFAVTEEFQPVYKELKNLIPKSAVGTLSANSSNVIQLIIDAYNSLSSEVILENSKLPEGVTISYKSYCKNGVNGTGENGRKCSNISIGDEVQFEISITANKCPNKNSEIIKIKPLGFTEEVEIILQFICECECQNEGIPSSPKCHEGNGSFECGACRCNEGRVGRHCECSTDEVNSEDMDAYCRKENSSEICSNNGECVCGQCVCRKRDNTNEIYSGKFCECDNFNCDRSNGLICGGNGVCKCRVCECNPNYTGSACDCSLDTTSCMATNGQICNGRGICECGACKCTDPKFQGPTCEMCQTCLGVCAEHKECVQCRAFNKGEKKDTCAQECSHFNITKVENRDKLPQPGQVDPLSHCKEKDVDDCWFYFTYSVNGNNEAIVHVVETPECPTGPDIIPIVAGVVAGIVLIGLALLLIWKLLMIIHDTREFAKFEKEKMNAKWDTGENPIYKSAVTTVVNPKYEGK.

Positions 1–20 (MNLQLIFWIGLISSICCVFG) are cleaved as a signal peptide. Residues 21–728 (QADENRCLKA…ETPECPTGPD (708 aa)) are Extracellular-facing. The PSI domain occupies 26–76 (RCLKANAKSCGECIQAGPNCGWCVNSTFLQEGMPTSARCDDLEALKKKGCH). 28 cysteine pairs are disulfide-bonded: Cys-27/Cys-45, Cys-35/Cys-464, Cys-38/Cys-64, Cys-48/Cys-75, Cys-207/Cys-213, Cys-261/Cys-301, Cys-401/Cys-415, Cys-435/Cys-462, Cys-466/Cys-486, Cys-477/Cys-489, Cys-491/Cys-500, Cys-502/Cys-533, Cys-516/Cys-531, Cys-525/Cys-536, Cys-538/Cys-553, Cys-555/Cys-576, Cys-560/Cys-574, Cys-568/Cys-579, Cys-581/Cys-590, Cys-592/Cys-615, Cys-599/Cys-613, Cys-607/Cys-618, Cys-620/Cys-630, Cys-633/Cys-636, Cys-640/Cys-691, Cys-646/Cys-665, Cys-649/Cys-661, and Cys-699/Cys-723. Residue Asn-50 is glycosylated (N-linked (GlcNAc...) asparagine). A compositionally biased stretch (basic and acidic residues) spans 75–91 (CHPDDIENPRGSKDVKK). Residues 75 to 107 (CHPDDIENPRGSKDVKKNKNVTNRSKGTAEKLQ) form a disordered region. Asn-94 and Asn-97 each carry an N-linked (GlcNAc...) asparagine glycan. The VWFA domain occupies 140-378 (DYPIDLYYLM…QLIIDAYNSL (239 aa)). Residues Ser-152 and Ser-154 each contribute to the Mg(2+) site. Residues Ser-154, Asp-157, Asp-158, and Glu-189 each contribute to the Ca(2+) site. A CX3CL1-binding region spans residues 207-213 (CTSEQNC). Asn-212 carries an N-linked (GlcNAc...) asparagine glycan. Residues Asn-244, Asp-246, Pro-248, and Glu-249 each coordinate Ca(2+). A Mg(2+)-binding site is contributed by Glu-249. Asn-269 carries N-linked (GlcNAc...) asparagine glycosylation. The CX3CL1-binding stretch occupies residues 295–314 (LPNDGQCHLENDVYTMSHYY). Position 362 (Ala-362) interacts with Ca(2+). N-linked (GlcNAc...) asparagine glycans are attached at residues Asn-363, Asn-406, and Asn-417. An interaction with TMEM182 region spans residues 383 to 465 (ILENSKLPEG…IILQFICECE (83 aa)). I-EGF domains follow at residues 466–501 (CQNE…RHCE), 502–554 (CSTD…KFCE), 555–591 (CDNF…SACD), and 592–631 (CSLD…PTCE). Asn-481 is a glycosylation site (N-linked (GlcNAc...) asparagine). Asn-520 carries an N-linked (GlcNAc...) asparagine glycan. The N-linked (GlcNAc...) asparagine glycan is linked to Asn-584. Asn-669 carries N-linked (GlcNAc...) asparagine glycosylation. A helical transmembrane segment spans residues 729–751 (IIPIVAGVVAGIVLIGLALLLIW). The Cytoplasmic portion of the chain corresponds to 752 to 798 (KLLMIIHDTREFAKFEKEKMNAKWDTGENPIYKSAVTTVVNPKYEGK). A signal for sorting from recycling endosomes; interaction with ACAP1 region spans residues 762 to 767 (EFAKFE). Thr-777 is modified (phosphothreonine). Tyr-783 carries the post-translational modification Phosphotyrosine. A Phosphoserine modification is found at Ser-785. The segment at 785-792 (SAVTTVVN) is interaction with ITGB1BP1. A Phosphothreonine modification is found at Thr-789. N6-acetyllysine; alternate is present on Lys-794. Residue Lys-794 forms a Glycyl lysine isopeptide (Lys-Gly) (interchain with G-Cter in SUMO1); alternate linkage.

It belongs to the integrin beta chain family. As to quaternary structure, interacts with seprase FAP (seprase); the interaction occurs at the cell surface of invadopodia membrane in a collagen-dependent manner. Heterodimer of an alpha and a beta subunit. Beta-1 associates with either alpha-1, alpha-2, alpha-3, alpha-4, alpha-5, alpha-6, alpha-7, alpha-8, alpha-9, alpha-10, alpha-11 or alpha-V. ITGA6:ITGB1 is found in a complex with CD9; interaction takes place in oocytes and is involved in sperm-egg fusion. Binds LGALS3BP and NMRK2, when associated with alpha-7, but not with alpha-5. Interacts with FLNA, FLNB, FLNC and RANBP9. Interacts with KRT1 in the presence of RACK1 and SRC. Interacts with JAML; integrin alpha-4/beta-1 may regulate leukocyte to endothelial cells adhesion by controlling JAML homodimerization. Interacts with RAB21. Interacts (via the cytoplasmic region) with RAB25 (via the hypervariable C-terminal region). Interacts with MYO10. Interacts with ITGB1BP1 (via C-terminal region); the interaction is a prerequisite for focal adhesion disassembly. Interacts with TLN1; the interaction is prevented by competitive binding of ITGB1BP1. Interacts with ACAP1; required for ITGB1 recycling. Interacts with ASAP3. Interacts with FERMT2; the interaction is inhibited in presence of ITGB1BP1. Interacts with DAB2. Interacts with FGR and HCK. Interacts with alpha-7A and alpha-7B in adult skeletal muscle. Interacts with alpha-7B in cardiomyocytes of adult heart. Interacts with EMP2; the interaction may be direct or indirect and ITGB1 has a heterodimer form. ITGA5:ITGB1 interacts with CCN3. ITGA4:ITGB1 is found in a ternary complex with CX3CR1 and CX3CL1. ITGA5:ITGB1 interacts with FBN1. ITGA5:ITGB1 acts as a receptor for fibronectin FN1 and mediates R-G-D-dependent cell adhesion to FN1. ITGA5:ITGB1 interacts with IL1B. Interacts with MDK. ITGA4:ITGB1 interacts with MDK; this interaction mediates MDK-induced osteoblast cells migration through PXN phosphorylation. ITGA6:ITGB1 interacts with MDK; this interaction mediates MDK-induced neurite-outgrowth. ITGA5:ITGB1 interacts with ACE2. Interacts with TMEM182 and LAMB1. Interacts with tensin TNS3; TNS3 also interacts with PEAK1, thus acting as an adapter molecule to bridge the association of PEAK1 with ITGB1. Interacts with tensin TNS4; the interaction displaces tensin TNS3 from the ITGB1 cytoplasmic tail and promotes ITGB1 stability. Integrin ITGA9:ITGB1 interacts with SPP1/OPN (via N-terminus). Integrin ITGA9:ITGB1 interacts with TNC/TNFN3 (via the 3rd Fibronectin type-III domain). Integrins ITGA4:ITGB1 and ITGA9:ITGB1 interact with SVEP1 (via Sushi domain 21); thereby inhibit Ca(2+) intracellular signaling and as a result repress vasocontraction. ITGA4:ITGB1 and ITGA5:ITGB1 interacts with SELP. Interacts with CD248. ITGA5:ITGB1 interacts with IGFBP1. ITGA4:ITGB1 interacts with BCAM. Interacts with ADGRG6.

It localises to the cell membrane. The protein localises to the cell projection. The protein resides in the invadopodium membrane. It is found in the ruffle membrane. Its subcellular location is the recycling endosome. It localises to the melanosome. The protein localises to the lamellipodium. The protein resides in the ruffle. It is found in the cell junction. Its subcellular location is the focal adhesion. Its function is as follows. Integrins alpha-1/beta-1, alpha-2/beta-1, alpha-10/beta-1 and alpha-11/beta-1 are receptors for collagen. Integrins alpha-1/beta-1 and alpha-2/beta-2 recognize the proline-hydroxylated sequence G-F-P-G-E-R in collagen. Integrins alpha-2/beta-1, alpha-3/beta-1, alpha-4/beta-1, alpha-5/beta-1, alpha-8/beta-1, alpha-10/beta-1, alpha-11/beta-1 and alpha-V/beta-1 are receptors for fibronectin. Alpha-4/beta-1 recognizes one or more domains within the alternatively spliced CS-1 and CS-5 regions of fibronectin. Integrin alpha-5/beta-1 is a receptor for fibrinogen. Integrin alpha-1/beta-1, alpha-2/beta-1, alpha-6/beta-1 and alpha-7/beta-1 are receptors for lamimin. Integrin alpha-6/beta-1 (ITGA6:ITGB1) is present in oocytes and is involved in sperm-egg fusion. Integrin alpha-4/beta-1 is a receptor for VCAM1 and recognizes the sequence Q-I-D-S in VCAM1. Integrin alpha-9/beta-1 is a receptor for VCAM1, cytotactin and osteopontin. It recognizes the sequence A-E-I-D-G-I-E-L in cytotactin. Integrin alpha-3/beta-1 is a receptor for epiligrin, thrombospondin and CSPG4. Integrin alpha-3/beta-1 provides a docking site for FAP (seprase) at invadopodia plasma membranes in a collagen-dependent manner and hence may participate in the adhesion, formation of invadopodia and matrix degradation processes, promoting cell invasion. Alpha-3/beta-1 may mediate with LGALS3 the stimulation by CSPG4 of endothelial cells migration. Integrin alpha-V/beta-1 is a receptor for vitronectin. Beta-1 integrins recognize the sequence R-G-D in a wide array of ligands. When associated with alpha-7/beta-1 integrin, regulates cell adhesion and laminin matrix deposition. Involved in promoting endothelial cell motility and angiogenesis. Involved in osteoblast compaction through the fibronectin fibrillogenesis cell-mediated matrix assembly process and the formation of mineralized bone nodules. May be involved in up-regulation of the activity of kinases such as PKC via binding to KRT1. Together with KRT1 and RACK1, serves as a platform for SRC activation or inactivation. Plays a mechanistic adhesive role during telophase, required for the successful completion of cytokinesis. ITGA4:ITGB1 binds to fractalkine (CX3CL1) and may act as its coreceptor in CX3CR1-dependent fractalkine signaling. ITGA4:ITGB1 and ITGA5:ITGB1 bind to PLA2G2A via a site (site 2) which is distinct from the classical ligand-binding site (site 1) and this induces integrin conformational changes and enhanced ligand binding to site 1. ITGA5:ITGB1 acts as a receptor for fibrillin-1 (FBN1) and mediates R-G-D-dependent cell adhesion to FBN1. ITGA5:ITGB1 is a receptor for IL1B and binding is essential for IL1B signaling. ITGA5:ITGB3 is a receptor for soluble CD40LG and is required for CD40/CD40LG signaling. Plays an important role in myoblast differentiation and fusion during skeletal myogenesis. ITGA9:ITGB1 may play a crucial role in SVEP1/polydom-mediated myoblast cell adhesion. Integrins ITGA9:ITGB1 and ITGA4:ITGB1 repress PRKCA-mediated L-type voltage-gated channel Ca(2+) influx and ROCK-mediated calcium sensitivity in vascular smooth muscle cells via their interaction with SVEP1, thereby inhibit vasocontraction. This Felis catus (Cat) protein is Integrin beta-1 (ITGB1).